Reading from the N-terminus, the 239-residue chain is Ribosomal RNA small subunit methyltransferase G (239 aa).

S-adenosyl-L-methionine is bound by residues Gly78, Phe83, 129–130 (AE), and Arg148.

Belongs to the methyltransferase superfamily. RNA methyltransferase RsmG family.

The protein localises to the cytoplasm. Functionally, specifically methylates the N7 position of a guanine in 16S rRNA. This is Ribosomal RNA small subunit methyltransferase G from Clostridium botulinum (strain Eklund 17B / Type B).